An 846-amino-acid polypeptide reads, in one-letter code: MRIKRREFLKASAAVGAVAVASPTLNAFAQTGTGASAMGEAEGKWIPSTCQGCTTWCPVEFLFRMAVRSKYAATQLSKANNGYCCVRGHLMLQQLYDPDRIKTPMKRTNPVKGRKEDPKICPYHMGMKQWDTIADKIMELRKNNETHKYLLMRGRYSDHNSIFYGDLTKMIGSPNNISHSAICAEVEKMGSMATEGFWGYRDYDLDNMKYLIAWACDPLSSNRQIPNAIRKIQGVMDRGKVVAVDPRMNNTASKAQEWLPIKPSEDGALALAMAHVIITKGLWSKEFVGDFKDGKNKFVAGKTVKEEDFEEKLTNGIVKWWNLEVKDRTPKWAAKVTGIDEATIIRVATEFAQAAPACAIWYGPNMQPRGSYAVMCIHALNGLVGASDSEGGLCTGMGSPSSSYPKIDAYQDDVAKAGAKNKKIDQRGTLKFPAMGSAKPGTGVVTNNVADALLAADPYDIKVAIGYFCNFNFSGTDGARWDKALAKVPFFVHCVPMFSEMTYFADIVLPAALHHTEDWAVIRSKANLHGHTSIQQPVVERMFDVKGVETEITWLLAEKLKAKGFENMYNWLYNEYKDPETGKNPTNSLEFALYATKIRSKKCWDPKENAEYKGDKLNGWADFMEKGIVNSPKFKFRQKWEKGFPTETKKFEFYSETLKKGLLAHAEKNKVTVDQVMEATNYEARGELAFIPHYESPKRHGDVKEFPFSLIDMKSRLNREGRSTNATWYHAFKKCDPGDVNQEDVLQINPADAKKLGINEGDMVKVTSVIGSLTVKARLWEGVRPGCVAKCYGQGHFAMGRVSAKDFGKAVARGANFNDIMPADYDRITGATARNGGFTGVKIEKA.

The segment at residues 1 to 29 is a signal peptide (tat-type signal); sequence MRIKRREFLKASAAVGAVAVASPTLNAFA. One can recognise a 4Fe-4S Mo/W bis-MGD-type domain in the interval 43–99; sequence GKWIPSTCQGCTTWCPVEFLFRMAVRSKYAATQLSKANNGYCCVRGHLMLQQLYDPD. 4 residues coordinate [4Fe-4S] cluster: cysteine 50, cysteine 53, cysteine 57, and cysteine 85. Arginine 155 contacts arsenite. Tyrosine 156 contacts arsenate. Histidine 179 is a binding site for arsenite. Serine 180 contributes to the arsenate binding site. Cysteine 183 contributes to the Mo-bis(molybdopterin guanine dinucleotide) binding site. Lysine 188 is a binding site for arsenate. Tyrosine 200 lines the arsenite pocket.

Belongs to the prokaryotic molybdopterin-containing oxidoreductase family. As to quaternary structure, heterodimer composed of one large subunit (ArrA) and one small subunit (ArrB). The cofactor is [4Fe-4S] cluster. Requires Mo-bis(molybdopterin guanine dinucleotide) as cofactor. Post-translationally, predicted to be exported by the Tat system. The position of the signal peptide cleavage has been experimentally proven.

Its subcellular location is the periplasm. It catalyses the reaction arsenite + A + H2O = arsenate + AH2 + H(+). In terms of biological role, component of the arsenate respiratory reductase (Arr) complex, which catalyzes the reduction of arsenate (As(V)) to arsenite (As(III)). Can use acetate as the electron donor. ArrA is the arsenate-binding subunit. This is Arsenate respiratory reductase molybdopterin-containing subunit ArrA from Chrysiogenes arsenatis.